A 581-amino-acid chain; its full sequence is NADH-quinone oxidoreductase subunit C/D (581 aa).

The NADH dehydrogenase I subunit C stretch occupies residues methionine 1–phenylalanine 172. Residues glutamate 196–arginine 581 form an NADH dehydrogenase I subunit D region.

This sequence in the N-terminal section; belongs to the complex I 30 kDa subunit family. It in the C-terminal section; belongs to the complex I 49 kDa subunit family. As to quaternary structure, NDH-1 is composed of 13 different subunits. Subunits NuoB, CD, E, F, and G constitute the peripheral sector of the complex.

Its subcellular location is the cell inner membrane. It carries out the reaction a quinone + NADH + 5 H(+)(in) = a quinol + NAD(+) + 4 H(+)(out). NDH-1 shuttles electrons from NADH, via FMN and iron-sulfur (Fe-S) centers, to quinones in the respiratory chain. The immediate electron acceptor for the enzyme in this species is believed to be ubiquinone. Couples the redox reaction to proton translocation (for every two electrons transferred, four hydrogen ions are translocated across the cytoplasmic membrane), and thus conserves the redox energy in a proton gradient. The polypeptide is NADH-quinone oxidoreductase subunit C/D (Rhodopseudomonas palustris (strain BisB18)).